A 273-amino-acid chain; its full sequence is Arginine and glutamate-rich protein 1 (273 aa).

Composition is skewed to basic residues over residues 1–29 (MGRS…RSRS) and 37–58 (VRKR…RSRS). Positions 1-74 (MGRSRSRSSS…VSRRERDRER (74 aa)) are necessary and sufficient for RNA binding. The tract at residues 1-113 (MGRSRSRSSS…EEKKAEFERQ (113 aa)) is disordered. Residues S58 and S60 each carry the phosphoserine modification. Phosphothreonine is present on T61. Basic and acidic residues-rich tracts occupy residues 66–84 (SRRE…RIDI) and 93–113 (SSLD…FERQ). Residues 75–273 (ASSPPDRIDI…KLSFSLKTQD (199 aa)) form a necessary and sufficient for transcriptional regulation region. Residues S76 and S77 each carry the phosphoserine modification. The short motif at 172 to 176 (LLEEL) is the LXXLL motif 1; degenerate element. Residues 201–205 (LERIL) carry the LXXLL motif 2; degenerate motif. Over residues 238-253 (MKLEQERQRQQKEEQK) the composition is skewed to basic and acidic residues. The segment at 238-273 (MKLEQERQRQQKEEQKIILGKGKSRPKLSFSLKTQD) is disordered. Position 266 is a phosphoserine (S266).

It belongs to the ARGLU1 family. Interacts with MED1; the interaction is direct. Interacts with PUF60, U2AF2 and JMJD6; may interact with other proteins involved in RNA processing and splicing.

Its subcellular location is the nucleus. It localises to the nucleus speckle. The protein resides in the chromosome. In terms of biological role, dual function regulator of gene expression; regulator of transcription and modulator of alternative splicing. General coactivator of nuclear receptor-induced gene expression, including genes activated by the glucocorticoid receptor NR3C1. Binds to a subset of pre-mRNAs and to components of the spliceosome machinery to directly modulate basal alternative splicing; involved in simple and complex cassette exon splicing events. Binds its own pre-mRNA and regulates its alternative splicing and degradation; one of the alternatively spliced products is a stable intronic sequence RNA (sisRNA) that binds the protein to regulate its ability to affect splicing. Binding of the sisRNA stimulates phase separation and localization to nuclear speckles, which may contribute to activation of nuclear receptor-induced gene expression. May also indirectly modulate alternative splicing. Regulates transcription of genes involved in heart development, neuronal cell function, protein localization and chromatin localization. Regulates splicing of genes involved in neurogenesis and chromatin organization. Essential for central nervous system development. Required for the estrogen-dependent expression of ESR1 target genes. Can act in cooperation with MED1. This chain is Arginine and glutamate-rich protein 1 (ARGLU1), found in Bos taurus (Bovine).